We begin with the raw amino-acid sequence, 314 residues long: Olfactory receptor 5B12 (314 aa).

Over 1–23 the chain is Extracellular; it reads MENNTEVTEFILVGLTDDPELQI. N-linked (GlcNAc...) asparagine glycosylation is present at Asn-3. Residues 24–44 traverse the membrane as a helical segment; it reads PLFIVFLFIYLITLVGNLGMI. Residues 45–52 are Cytoplasmic-facing; sequence ELILLDSC. The helical transmembrane segment at 53-73 threads the bilayer; it reads LHTPMYFFLSNLSLVDFGYSS. Topologically, residues 74–97 are extracellular; it reads AVTPKVMVGFLTGDKFILYNACAT. An intrachain disulfide couples Cys-95 to Cys-187. A helical membrane pass occupies residues 98 to 118; the sequence is QFFFFVAFITAESFLLASMAY. Residues 119 to 137 lie on the Cytoplasmic side of the membrane; the sequence is DRYAALCKPLHYTTTMTTN. A helical membrane pass occupies residues 138-158; the sequence is VCACLAIGSYICGFLNASIHT. Residues 159–194 lie on the Extracellular side of the membrane; sequence GNTFRLSFCRSNVVEHFFCDAPPLLTLSCSDNYISE. The chain crosses the membrane as a helical span at residues 195–215; sequence MVIFFVVGFNDLFSILVILIS. Residues 216 to 235 lie on the Cytoplasmic side of the membrane; the sequence is YLFIFITIMKMRSPEGRQKA. The chain crosses the membrane as a helical span at residues 236 to 256; sequence FSTCASHLTAVSIFYGTGIFM. Residues 257 to 269 lie on the Extracellular side of the membrane; sequence YLRPNSSHFMGTD. N-linked (GlcNAc...) asparagine glycosylation is present at Asn-261. Residues 270 to 290 traverse the membrane as a helical segment; sequence KMASVFYAIVIPMLNPLVYSL. Over 291 to 314 the chain is Cytoplasmic; the sequence is RNKEVKSAFKKTVGKAKASIGFIF.

This sequence belongs to the G-protein coupled receptor 1 family.

Its subcellular location is the cell membrane. Its function is as follows. Odorant receptor. This Homo sapiens (Human) protein is Olfactory receptor 5B12 (OR5B12).